A 245-amino-acid polypeptide reads, in one-letter code: MITHILLDIEGTTCPTSFVSDTLFPYADTHLEGFLNEHIENNEVQSLIDEAWHEWQADEDPSSKDLLSKAFRENSSEIENICSYLHHLITIDRKSSALKDLQGRIWREGYEKGDISSSLYPETIEVLNKLKQQDYILAVYSSGSISAQKLLYRHTTNGDQTALFSHWFDTRTGNKKESKSYSDISIAMNIPVEKVMFVSDSCAECNAAKKAGMSVLFSLREGNPEQDPHDHQPIKDLRCLFDYLL.

This sequence belongs to the HAD-like hydrolase superfamily. MasA/MtnC family. Monomer. The cofactor is Mg(2+).

The enzyme catalyses 5-methylsulfanyl-2,3-dioxopentyl phosphate + H2O = 1,2-dihydroxy-5-(methylsulfanyl)pent-1-en-3-one + phosphate. Its pathway is amino-acid biosynthesis; L-methionine biosynthesis via salvage pathway; L-methionine from S-methyl-5-thio-alpha-D-ribose 1-phosphate: step 3/6. It functions in the pathway amino-acid biosynthesis; L-methionine biosynthesis via salvage pathway; L-methionine from S-methyl-5-thio-alpha-D-ribose 1-phosphate: step 4/6. Bifunctional enzyme that catalyzes the enolization of 2,3-diketo-5-methylthiopentyl-1-phosphate (DK-MTP-1-P) into the intermediate 2-hydroxy-3-keto-5-methylthiopentenyl-1-phosphate (HK-MTPenyl-1-P), which is then dephosphorylated to form the acireductone 1,2-dihydroxy-3-keto-5-methylthiopentene (DHK-MTPene). The polypeptide is Enolase-phosphatase E1 (Prochlorococcus marinus (strain MIT 9313)).